A 244-amino-acid chain; its full sequence is MSETSRIDGRRLDQLRDVRIERGWLSQAEGSVLVSFGRTTVLCNASVTEGVPRWRKGSGLGWVTAEYEMLPRATNERSGRESRKGKVGGRTHEISRLVGRSLRAVVDDKALGENTIILDCDVLQADGGTRTASITGAYVALIDAVNWLRGRGGLVSEPIIGSVQAISVGVVDGIPMLDLAYKEDSRADTDMNVVMSGNGDFVEIQGTAEGTPFNRNLLNELLDLAAGGCATLKQAQSEALGVTL.

Phosphate-binding positions include R90 and 128-130 (GTR).

The protein belongs to the RNase PH family. In terms of assembly, homohexameric ring arranged as a trimer of dimers.

The catalysed reaction is tRNA(n+1) + phosphate = tRNA(n) + a ribonucleoside 5'-diphosphate. Functionally, phosphorolytic 3'-5' exoribonuclease that plays an important role in tRNA 3'-end maturation. Removes nucleotide residues following the 3'-CCA terminus of tRNAs; can also add nucleotides to the ends of RNA molecules by using nucleoside diphosphates as substrates, but this may not be physiologically important. Probably plays a role in initiation of 16S rRNA degradation (leading to ribosome degradation) during starvation. The polypeptide is Ribonuclease PH (Cutibacterium acnes (strain DSM 16379 / KPA171202) (Propionibacterium acnes)).